The sequence spans 96 residues: MNSFSFFLVIFVVLNLQVAKLMAFPASEDLSQDPRDMDQITNTVFDLRALQSALQKSQVNTKSRSKRLENDDDDDFDCDCDEEYDDEYIEEYCDCD.

The N-terminal stretch at 1-23 (MNSFSFFLVIFVVLNLQVAKLMA) is a signal peptide.

It belongs to the scoloptoxin-06 family. Contains 2 disulfide bonds. In terms of tissue distribution, expressed by the venom gland.

It localises to the secreted. The protein is U-scoloptoxin(06)-Sm1a of Scolopendra morsitans (Tanzanian blue ringleg centipede).